The chain runs to 511 residues: Activin receptor type-2B (511 aa).

Positions 1–20 (MGASVALTFLLLLATFRAGS) are cleaved as a signal peptide. Residues 21–136 (GHDEVETREC…KPQPSASVLN (116 aa)) lie on the Extracellular side of the membrane. Cysteines 30 and 61 form a disulfide. N-linked (GlcNAc...) asparagine glycosylation is found at asparagine 43 and asparagine 67. 3 cysteine pairs are disulfide-bonded: cysteine 86/cysteine 105, cysteine 92/cysteine 104, and cysteine 106/cysteine 111. A helical transmembrane segment spans residues 137–157 (ILIYSLLPIVGLSMAILLAFW). Topologically, residues 158 to 511 (MYRHRKPSYG…VDLPPKESSI (354 aa)) are cytoplasmic. Residues 189–477 (LQLLDIKARG…LSAGCVEERI (289 aa)) enclose the Protein kinase domain. ATP-binding positions include 195–203 (KARGRFGCV) and lysine 216. Aspartate 320 serves as the catalytic Proton acceptor.

It belongs to the protein kinase superfamily. TKL Ser/Thr protein kinase family. TGFB receptor subfamily.

It is found in the membrane. It catalyses the reaction L-threonyl-[receptor-protein] + ATP = O-phospho-L-threonyl-[receptor-protein] + ADP + H(+). The catalysed reaction is L-seryl-[receptor-protein] + ATP = O-phospho-L-seryl-[receptor-protein] + ADP + H(+). In terms of biological role, receptor for activin A, activin B and inhibin A. Involved in transmembrane signaling. The sequence is that of Activin receptor type-2B (acvr2b) from Xenopus laevis (African clawed frog).